Here is a 529-residue protein sequence, read N- to C-terminus: Bifunctional purine biosynthesis protein PurH (529 aa).

The region spanning 1–148 (MQQRRPVRRA…KNHKDVAIVV (148 aa)) is the MGS-like domain.

Belongs to the PurH family.

The catalysed reaction is (6R)-10-formyltetrahydrofolate + 5-amino-1-(5-phospho-beta-D-ribosyl)imidazole-4-carboxamide = 5-formamido-1-(5-phospho-D-ribosyl)imidazole-4-carboxamide + (6S)-5,6,7,8-tetrahydrofolate. It catalyses the reaction IMP + H2O = 5-formamido-1-(5-phospho-D-ribosyl)imidazole-4-carboxamide. Its pathway is purine metabolism; IMP biosynthesis via de novo pathway; 5-formamido-1-(5-phospho-D-ribosyl)imidazole-4-carboxamide from 5-amino-1-(5-phospho-D-ribosyl)imidazole-4-carboxamide (10-formyl THF route): step 1/1. It functions in the pathway purine metabolism; IMP biosynthesis via de novo pathway; IMP from 5-formamido-1-(5-phospho-D-ribosyl)imidazole-4-carboxamide: step 1/1. This chain is Bifunctional purine biosynthesis protein PurH, found in Salmonella dublin (strain CT_02021853).